The chain runs to 949 residues: MARHETSFPEILDVAALRARCDFIASAHAEQREPMRRALLAAFKEANIAGRAKARELLAADGAGIKCAERISWLQDQLITLLHDFVLNQVFDAAKAPETSRIAVTAVGGYGRGTLAPGSDIDLLFLLPAKKAVWAEPAIEFMLYILWDLGFKVGHATRTIEDCIRLSRADMTIRTAILECRYVCGSVALASELETRFDHEIVRNTGPEFIAAKLAERDERHRKAGDTRYLVEPNVKEGKGGLRDLHTLFWISKYFYRVKDSADLVKLGVLSRQEYKLFQKAEDFLWAVRCHMHFLTGKAEERLSFDIQREIAEALGYHDHPGLSAVERFMKHYFLVAKDVGDLTRIFCSALEDQQAKDAPGISGVISRFRNRVRKIPGTLDFVDDGGRIALASPDVFKRDPVNLLRMFHIADINGLEFHPAALKQVTRSLSLITPHLRENEEANRLFLSILTSRRNPELILRRMNEAAVLGRFIPEFGKIVSMMQFNMYHHYTVDEHLLRAVDVLSRIERGLEEEAHPLTAMLMPAIEDREALYVAVLLHDIAKGRPEDHSVAGAKVARKLCPRFRLSPKQTETVVWLVEEHLTMSMVAQTRDLNDRKTIVDFAERVQSLERLKMLLILTVCDIRAVGPGVWNGWKGQLLRTLYYETELLLSGGFSELSRKERAKHAADMLEEALADWPKEERQTYVRLHYQPYLLTVALDEQVRHAAFIREADAAGRTLATMVRTHDFHAITEITVLSPDHPRLLTVIAGACAAAGANIVGAQIHTTSDGRALDTILVNREFSVAEDETRRAASIGKLIEDVLSGRKKLPDVIASRTRSKKRSRAFTVTPEVTISNALSNKFTVIEVEGLDRTGLLSEVTAVLSDLSLDIASAHITTFGEKVIDTFYVTDLVGSKITSENRQMNIAARLKAVLAGEVDEARERMPSGIIAPTPVPRASHGSKATKAET.

A uridylyltransferase region spans residues 1–377 (MARHETSFPE…RFRNRVRKIP (377 aa)). The interval 378 to 733 (GTLDFVDDGG…VRTHDFHAIT (356 aa)) is uridylyl-removing. The HD domain maps to 494–610 (VDEHLLRAVD…VDFAERVQSL (117 aa)). ACT domains are found at residues 734-815 (EITV…DVIA) and 845-926 (VIEV…ERMP). The segment at 925-949 (MPSGIIAPTPVPRASHGSKATKAET) is disordered.

It belongs to the GlnD family. Mg(2+) serves as cofactor.

It catalyses the reaction [protein-PII]-L-tyrosine + UTP = [protein-PII]-uridylyl-L-tyrosine + diphosphate. It carries out the reaction [protein-PII]-uridylyl-L-tyrosine + H2O = [protein-PII]-L-tyrosine + UMP + H(+). Uridylyltransferase (UTase) activity is inhibited by glutamine, while glutamine activates uridylyl-removing (UR) activity. In terms of biological role, modifies, by uridylylation and deuridylylation, the PII regulatory proteins (GlnB and homologs), in response to the nitrogen status of the cell that GlnD senses through the glutamine level. Under low glutamine levels, catalyzes the conversion of the PII proteins and UTP to PII-UMP and PPi, while under higher glutamine levels, GlnD hydrolyzes PII-UMP to PII and UMP (deuridylylation). Thus, controls uridylylation state and activity of the PII proteins, and plays an important role in the regulation of nitrogen fixation and metabolism. The sequence is that of Bifunctional uridylyltransferase/uridylyl-removing enzyme from Sinorhizobium medicae (strain WSM419) (Ensifer medicae).